Reading from the N-terminus, the 301-residue chain is uncharacterized protein (301 aa).

The signal sequence occupies residues 1–25 (MKFKNTLSIFKILIILFSFYNVAFS). The Extracellular portion of the chain corresponds to 26–279 (DDTEKYTFKG…STTGSKDSST (254 aa)). The segment at 174–281 (LYTGSSNTPN…TGSKDSSTGN (108 aa)) is disordered. 4 N-linked (GlcNAc...) asparagine glycosylation sites follow: asparagine 191, asparagine 212, asparagine 234, and asparagine 241. The segment covering 204-234 (SSSDSTNSNSSSTDTASSSPSSSPSSSPSPN) has biased composition (low complexity). A compositionally biased stretch (low complexity) spans 254-281 (GGVETSTAGSSTGTTSSTTGSKDSSTGN). The helical transmembrane segment at 280–300 (GNSILPTLIIVTFFVLTLVIM) threads the bilayer. A topological domain (cytoplasmic) is located at residue serine 301.

The protein resides in the membrane. This is an uncharacterized protein from Dictyostelium discoideum (Social amoeba).